Reading from the N-terminus, the 251-residue chain is tRNA pseudouridine synthase A (251 aa).

Asp-56 acts as the Nucleophile in catalysis. A substrate-binding site is contributed by Tyr-110.

The protein belongs to the tRNA pseudouridine synthase TruA family.

The enzyme catalyses uridine(38/39/40) in tRNA = pseudouridine(38/39/40) in tRNA. Its function is as follows. Formation of pseudouridine at positions 38, 39 and 40 in the anticodon stem and loop of transfer RNAs. This is tRNA pseudouridine synthase A from Picrophilus torridus (strain ATCC 700027 / DSM 9790 / JCM 10055 / NBRC 100828 / KAW 2/3).